Consider the following 332-residue polypeptide: Acryloyl-coenzyme A reductase (332 aa).

Residue cysteine 38 coordinates Zn(2+). Tyrosine 39 contributes to the NADP(+) binding site. Residues histidine 60, aspartate 90, cysteine 93, cysteine 96, cysteine 104, and cysteine 146 each contribute to the Zn(2+) site. NADP(+) is bound by residues 172–175 (SGGV) and 194–196 (TTS).

It belongs to the zinc-containing alcohol dehydrogenase family. In terms of assembly, monomer. Zn(2+) is required as a cofactor.

It carries out the reaction propanoyl-CoA + NADP(+) = acryloyl-CoA + NADPH + H(+). In terms of biological role, plays a role in autotrophic carbon fixation via the 3-hydroxypropionate/4-hydroxybutyrate cycle. Catalyzes the acryloyl-CoA dependent NADPH oxidation and formation of propionyl-CoA. The polypeptide is Acryloyl-coenzyme A reductase (Metallosphaera sedula (strain ATCC 51363 / DSM 5348 / JCM 9185 / NBRC 15509 / TH2)).